We begin with the raw amino-acid sequence, 368 residues long: Flagellar P-ring protein 1 (368 aa).

An N-terminal signal peptide occupies residues 1–24; it reads MIFKQIRRLIAAALLAALSLPAAA.

This sequence belongs to the FlgI family. As to quaternary structure, the basal body constitutes a major portion of the flagellar organelle and consists of four rings (L,P,S, and M) mounted on a central rod.

Its subcellular location is the periplasm. It is found in the bacterial flagellum basal body. In terms of biological role, assembles around the rod to form the L-ring and probably protects the motor/basal body from shearing forces during rotation. This is Flagellar P-ring protein 1 from Chromobacterium violaceum (strain ATCC 12472 / DSM 30191 / JCM 1249 / CCUG 213 / NBRC 12614 / NCIMB 9131 / NCTC 9757 / MK).